The primary structure comprises 505 residues: MAEIYPSLVQCAIVATAFKVLLFPAYKSTDFEVHRNWLAITHSLPLWEWYYEKTSEWTLDYPPFFAYFEWIMSQVARLADPAMIWVHNLEYDSWQTVYFQRWTVIVTELVLLYALQMFVDSTPGVSKRAAHAAAVSILLSPGLLIIDHIHFQYNGVMYGILIASLVLAKKKSSLLASGLVFAALLCMKHIYLYLAPAYFVYLLRVYCLPPKLSPRSIFRIQFFNCVKLGGGIAAIFAAAFGPFALKNQIPQIFSRLFPFSRGLCHAYWAPNVWALYSFMDRLLISLAPRIGLPIKADALNSVTRGLVGDTSFAVLPDITPRMCFVLTLLFQAIPLIKLFMRPTWEGFIGGVTLCGYASFLFGWHVHEKAILLVIIPFSLIALKDRRYLGAFRPLAVAGHVSLFPLIFTPAEFPIKTVYTIFWLVLFLMAFDRLAPAPTRQRLFLFDRFSTAYITVSIPLIFYCSLMHGIIFGKSYEFLPLMFTSSYSAIGVVGSWLGFMVVYFTE.

Over 1–3 (MAE) the chain is Lumenal. A helical transmembrane segment spans residues 4-24 (IYPSLVQCAIVATAFKVLLFP). At 25-101 (AYKSTDFEVH…DSWQTVYFQR (77 aa)) the chain is on the cytoplasmic side. The chain crosses the membrane as a helical span at residues 102-122 (WTVIVTELVLLYALQMFVDST). Over 123-128 (PGVSKR) the chain is Lumenal. The chain crosses the membrane as a helical span at residues 129–149 (AAHAAAVSILLSPGLLIIDHI). At 150–152 (HFQ) the chain is on the cytoplasmic side. The chain crosses the membrane as a helical span at residues 153–169 (YNGVMYGILIASLVLAK). At 170–173 (KKSS) the chain is on the lumenal side. Residues 174–194 (LLASGLVFAALLCMKHIYLYL) traverse the membrane as a helical segment. Topologically, residues 195 to 224 (APAYFVYLLRVYCLPPKLSPRSIFRIQFFN) are cytoplasmic. The chain crosses the membrane as a helical span at residues 225 to 245 (CVKLGGGIAAIFAAAFGPFAL). The Lumenal portion of the chain corresponds to 246–319 (KNQIPQIFSR…TSFAVLPDIT (74 aa)). Residues 320-340 (PRMCFVLTLLFQAIPLIKLFM) form a helical membrane-spanning segment. Residues 341 to 359 (RPTWEGFIGGVTLCGYASF) lie on the Cytoplasmic side of the membrane. Residues 360–380 (LFGWHVHEKAILLVIIPFSLI) traverse the membrane as a helical segment. Topologically, residues 381-386 (ALKDRR) are lumenal. The helical transmembrane segment at 387–407 (YLGAFRPLAVAGHVSLFPLIF) threads the bilayer. Topologically, residues 408–409 (TP) are cytoplasmic. The helical transmembrane segment at 410–430 (AEFPIKTVYTIFWLVLFLMAF) threads the bilayer. At 431 to 450 (DRLAPAPTRQRLFLFDRFST) the chain is on the lumenal side. Residues 451–471 (AYITVSIPLIFYCSLMHGIIF) form a helical membrane-spanning segment. The Cytoplasmic segment spans residues 472 to 480 (GKSYEFLPL). A helical membrane pass occupies residues 481–501 (MFTSSYSAIGVVGSWLGFMVV). The Lumenal segment spans residues 502 to 505 (YFTE).

The protein belongs to the ALG6/ALG8 glucosyltransferase family.

Its subcellular location is the endoplasmic reticulum membrane. The catalysed reaction is an alpha-D-Glc-(1-&gt;3)-alpha-D-Man-(1-&gt;2)-alpha-D-Man-(1-&gt;2)-alpha-D-Man-(1-&gt;3)-[alpha-D-Man-(1-&gt;2)-alpha-D-Man-(1-&gt;3)-[alpha-D-Man-(1-&gt;2)-alpha-D-Man-(1-&gt;6)]-alpha-D-Man-(1-&gt;6)]-beta-D-Man-(1-&gt;4)-beta-D-GlcNAc-(1-&gt;4)-alpha-D-GlcNAc-diphospho-di-trans,poly-cis-dolichol + a di-trans,poly-cis-dolichyl beta-D-glucosyl phosphate = an alpha-D-Glc-(1-&gt;3)-alpha-D-Glc-(1-&gt;3)-alpha-D-Man-(1-&gt;2)-alpha-D-Man-(1-&gt;2)-alpha-D-Man-(1-&gt;3)-[alpha-D-Man-(1-&gt;2)-alpha-D-Man-(1-&gt;3)-[alpha-D-Man-(1-&gt;2)-alpha-D-Man-(1-&gt;6)]-alpha-D-Man-(1-&gt;6)]-beta-D-Man-(1-&gt;4)-beta-D-GlcNAc-(1-&gt;4)-alpha-D-GlcNAc-diphospho-di-trans,poly-cis-dolichol + a di-trans,poly-cis-dolichyl phosphate + H(+). It functions in the pathway protein modification; protein glycosylation. Its function is as follows. Dolichyl pyrophosphate Glc1Man9GlcNAc2 alpha-1,3-glucosyltransferase that operates in the biosynthetic pathway of dolichol-linked oligosaccharides, the glycan precursors employed in protein asparagine (N)-glycosylation. The assembly of dolichol-linked oligosaccharides begins on the cytosolic side of the endoplasmic reticulum membrane and finishes in its lumen. The sequential addition of sugars to dolichol pyrophosphate produces dolichol-linked oligosaccharides containing fourteen sugars, including two GlcNAcs, nine mannoses and three glucoses. Once assembled, the oligosaccharide is transferred from the lipid to nascent proteins by oligosaccharyltransferases. In the lumen of the endoplasmic reticulum, adds the second glucose residue from dolichyl phosphate glucose (Dol-P-Glc) onto the lipid-linked oligosaccharide intermediate Glc(1)Man(9)GlcNAc(2)-PP-Dol to produce Glc(2)Man(9)GlcNAc(2)-PP-Dol. The chain is Dolichyl pyrophosphate Glc1Man9GlcNAc2 alpha-1,3-glucosyltransferase (alg-8) from Neurospora crassa (strain ATCC 24698 / 74-OR23-1A / CBS 708.71 / DSM 1257 / FGSC 987).